The following is a 567-amino-acid chain: PCNA-interacting partner (567 aa).

Residues 485–552 (IDLKTAEQVK…GVSRNKASKN (68 aa)) form a disordered region. Composition is skewed to polar residues over residues 512-524 (DIQS…QENE) and 534-552 (LTSS…ASKN).

Belongs to the PARI family.

The protein localises to the cytoplasm. The protein resides in the nucleus. Its function is as follows. Required to suppress inappropriate homologous recombination, thereby playing a central role DNA repair and in the maintenance of genomic stability. This chain is PCNA-interacting partner (parpbp), found in Xenopus laevis (African clawed frog).